The following is a 184-amino-acid chain: NADH-quinone oxidoreductase subunit B (184 aa).

[4Fe-4S] cluster contacts are provided by C37, C38, C103, and C132.

Belongs to the complex I 20 kDa subunit family. As to quaternary structure, NDH-1 is composed of 14 different subunits. Subunits NuoB, C, D, E, F, and G constitute the peripheral sector of the complex. It depends on [4Fe-4S] cluster as a cofactor.

The protein resides in the cell membrane. The catalysed reaction is a quinone + NADH + 5 H(+)(in) = a quinol + NAD(+) + 4 H(+)(out). Its function is as follows. NDH-1 shuttles electrons from NADH, via FMN and iron-sulfur (Fe-S) centers, to quinones in the respiratory chain. The immediate electron acceptor for the enzyme in this species is believed to be a menaquinone. Couples the redox reaction to proton translocation (for every two electrons transferred, four hydrogen ions are translocated across the cytoplasmic membrane), and thus conserves the redox energy in a proton gradient. The polypeptide is NADH-quinone oxidoreductase subunit B (Nocardioides sp. (strain ATCC BAA-499 / JS614)).